The chain runs to 197 residues: Holliday junction branch migration complex subunit RuvA (197 aa).

Residues 1-63 form a domain I region; sequence MIEFIRGYVD…EDVLALYGFH (63 aa). The segment at 64 to 142 is domain II; it reads TRQERMLFAK…AIVPDAFPNL (79 aa). The segment at 143–149 is flexible linker; sequence FTEPLEE. Residues 149-197 are domain III; that stretch reads ETNALSEAIEALKALGYADKEIQKVVPMLRQERLSTEGYIKLALQKLLK.

The protein belongs to the RuvA family. As to quaternary structure, homotetramer. Forms an RuvA(8)-RuvB(12)-Holliday junction (HJ) complex. HJ DNA is sandwiched between 2 RuvA tetramers; dsDNA enters through RuvA and exits via RuvB. An RuvB hexamer assembles on each DNA strand where it exits the tetramer. Each RuvB hexamer is contacted by two RuvA subunits (via domain III) on 2 adjacent RuvB subunits; this complex drives branch migration. In the full resolvosome a probable DNA-RuvA(4)-RuvB(12)-RuvC(2) complex forms which resolves the HJ.

The protein localises to the cytoplasm. Its function is as follows. The RuvA-RuvB-RuvC complex processes Holliday junction (HJ) DNA during genetic recombination and DNA repair, while the RuvA-RuvB complex plays an important role in the rescue of blocked DNA replication forks via replication fork reversal (RFR). RuvA specifically binds to HJ cruciform DNA, conferring on it an open structure. The RuvB hexamer acts as an ATP-dependent pump, pulling dsDNA into and through the RuvAB complex. HJ branch migration allows RuvC to scan DNA until it finds its consensus sequence, where it cleaves and resolves the cruciform DNA. The sequence is that of Holliday junction branch migration complex subunit RuvA from Anoxybacillus flavithermus (strain DSM 21510 / WK1).